A 486-amino-acid polypeptide reads, in one-letter code: uncharacterized protein (486 aa).

This is an uncharacterized protein from Methanocaldococcus jannaschii (strain ATCC 43067 / DSM 2661 / JAL-1 / JCM 10045 / NBRC 100440) (Methanococcus jannaschii).